The sequence spans 211 residues: RILP-like protein 2 (211 aa).

Residues 1–32 (MEEPPVREEEEEEGEEDEERDEVGPEGALGKS) are disordered. Over residues 8–21 (EEEEEEGEEDEERD) the composition is skewed to acidic residues. Residues 24 to 106 (GPEGALGKSP…RKEVEGLRRQ (83 aa)) enclose the RH1 domain. The stretch at 70-164 (RVLEMLEALV…VQEELQCYKS (95 aa)) forms a coiled coil. Ser-107 bears the Phosphoserine mark. The region spanning 130–201 (RPRFTLQELR…NKEEKTIIKK (72 aa)) is the RH2 domain. Positions 166 to 190 (LIPPREGPGGRREKDAVVTSAKNAG) are disordered.

This sequence belongs to the RILPL family. In terms of assembly, homodimer. Interacts with RAC1. Interacts (via N-terminus) with MYO5A, the interaction is required for its role in dendrite formation. Interacts with RAB8A; interaction is dependent on the phosphorylation of RAB8A on 'Thr-72'. Interacts with RAB10 and RAB12; interaction is dependent on the phosphorylation of 'Thr-73' on RAB10 and 'Ser-105' on RAB12. In terms of tissue distribution, widely expressed. Expressed at higher level in lung.

The protein localises to the cytoplasm. Its subcellular location is the cytosol. It localises to the cytoskeleton. The protein resides in the microtubule organizing center. It is found in the centrosome. The protein localises to the cell projection. Its subcellular location is the cilium. Involved in cell shape and neuronal morphogenesis, positively regulating the establishment and maintenance of dendritic spines. Plays a role in cellular protein transport, including protein transport away from primary cilia. May function via activation of RAC1 and PAK1. This is RILP-like protein 2 (RILPL2) from Homo sapiens (Human).